The chain runs to 276 residues: Formamidopyrimidine-DNA glycosylase (276 aa).

P2 functions as the Schiff-base intermediate with DNA in the catalytic mechanism. E3 (proton donor) is an active-site residue. Catalysis depends on K58, which acts as the Proton donor; for beta-elimination activity. 3 residues coordinate DNA: H94, R112, and R157. The segment at F242–R276 adopts an FPG-type zinc-finger fold. Catalysis depends on R266, which acts as the Proton donor; for delta-elimination activity.

Belongs to the FPG family. As to quaternary structure, monomer. Zn(2+) serves as cofactor.

It carries out the reaction Hydrolysis of DNA containing ring-opened 7-methylguanine residues, releasing 2,6-diamino-4-hydroxy-5-(N-methyl)formamidopyrimidine.. The catalysed reaction is 2'-deoxyribonucleotide-(2'-deoxyribose 5'-phosphate)-2'-deoxyribonucleotide-DNA = a 3'-end 2'-deoxyribonucleotide-(2,3-dehydro-2,3-deoxyribose 5'-phosphate)-DNA + a 5'-end 5'-phospho-2'-deoxyribonucleoside-DNA + H(+). Functionally, involved in base excision repair of DNA damaged by oxidation or by mutagenic agents. Acts as a DNA glycosylase that recognizes and removes damaged bases. Has a preference for oxidized purines, such as 7,8-dihydro-8-oxoguanine (8-oxoG). Has AP (apurinic/apyrimidinic) lyase activity and introduces nicks in the DNA strand. Cleaves the DNA backbone by beta-delta elimination to generate a single-strand break at the site of the removed base with both 3'- and 5'-phosphates. The chain is Formamidopyrimidine-DNA glycosylase from Burkholderia pseudomallei (strain 1710b).